Consider the following 449-residue polypeptide: MMLSKIINNISKSGLRNTTNSKNGGLLYFQNYYMKSSTTITRLNSGNNNYSNNNNNNNNIILNDKFLNKQQNDKKIIYNNIFEEKNQFLKRIYSTSTTTTSTTTTTNINENNIKNENNNENNNENSNNNNEQSIKSNQTKSKGFLRGPYMTLIKLPITVYVTLTAIAGYVAACPIGAFDWVVLSQVSIGTFLASCSANIHNQEIEVQHDRKMPRTKDRPLVIGTINRGKAWVGSIALLTLGFGTMAVTPSLFVPGTLAACNVILYCWYTDLKRVTPLNTWIGAFVGAIPPLIGSVAATGEFEAIGMLLATFMYIWQIPHFLALSQVLREQYRGAGYKMLSVTHEKKTVDRVSLAHALFGIPLPFIFDYFFNFNVHPITLTCMALSSASLALPFITKISPKRLYIISLISLPITLFLSCLLRQPFAYYTDDDDEDKDKDNQNQIENQDKK.

The span at 99–138 shows a compositional bias: low complexity; it reads TTSTTTTTNINENNIKNENNNENNNENSNNNNEQSIKSNQ. A disordered region spans residues 99-140; it reads TTSTTTTTNINENNIKNENNNENNNENSNNNNEQSIKSNQTK. 7 helical membrane passes run 163–183, 245–267, 279–299, 303–323, 352–372, 374–394, and 402–422; these read LTAI…WVVL, MAVT…LYCW, TWIG…AATG, AIGM…FLAL, SLAH…FFNF, VHPI…LPFI, and LYII…LLRQ.

This sequence belongs to the UbiA prenyltransferase family.

Its subcellular location is the mitochondrion membrane. Functionally, converts protoheme IX and farnesyl diphosphate to heme O. In Dictyostelium discoideum (Social amoeba), this protein is Probable protoheme IX farnesyltransferase, mitochondrial (cox10).